Here is a 335-residue protein sequence, read N- to C-terminus: Large ribosomal subunit protein uL3 (335 aa).

Disordered regions lie at residues 1–35, 234–256, and 312–335; these read MPQP…ADDG, IGNL…GQTG, and AVRP…SNQG. The segment covering 244 to 256 has biased composition (polar residues); that stretch reads RVRSTVPQQGQTG.

The protein belongs to the universal ribosomal protein uL3 family. In terms of assembly, part of the 50S ribosomal subunit. Forms a cluster with proteins L14 and L24e.

One of the primary rRNA binding proteins, it binds directly near the 3'-end of the 23S rRNA, where it nucleates assembly of the 50S subunit. In Halobacterium salinarum (strain ATCC 29341 / DSM 671 / R1), this protein is Large ribosomal subunit protein uL3.